The primary structure comprises 90 residues: Probable two-component-system connector protein YmgA (90 aa).

The span at 63 to 80 (SDSGGPNRRTATADNKSM) shows a compositional bias: polar residues. A disordered region spans residues 63–90 (SDSGGPNRRTATADNKSMFNGKKINRIH).

Probably a connector protein for RcsB/C regulation of biofilm formation, providing additional signal input into the two-component signaling pathway. May serve to stimulate biofilm maturation, probably via the Rcs phosphorelay. Mild overexpression at 16 degrees Celsius increases the production of colanic acid, an exopolysaccharide and matrix component, and reduces adhesive curli fimbriae expression. Both of these effects require RcsB. This is Probable two-component-system connector protein YmgA (ymgA) from Escherichia coli (strain K12).